A 128-amino-acid polypeptide reads, in one-letter code: Small ribosomal subunit protein uS11 (128 aa).

The protein belongs to the universal ribosomal protein uS11 family. As to quaternary structure, part of the 30S ribosomal subunit. Interacts with proteins S7 and S18. Binds to IF-3.

Functionally, located on the platform of the 30S subunit, it bridges several disparate RNA helices of the 16S rRNA. Forms part of the Shine-Dalgarno cleft in the 70S ribosome. The sequence is that of Small ribosomal subunit protein uS11 from Synechococcus sp. (strain JA-3-3Ab) (Cyanobacteria bacterium Yellowstone A-Prime).